The sequence spans 338 residues: DNA-directed RNA polymerase I subunit RPA43 (338 aa).

The interval E209 to L338 is disordered. A phosphoserine mark is found at S242, S304, and S316. Phosphothreonine is present on T322. At S328 the chain carries Phosphoserine. Residues S328–L338 are compositionally biased toward basic residues.

This sequence belongs to the eukaryotic RPA43 RNA polymerase subunit family. As to quaternary structure, component of the RNA polymerase I (Pol I) complex consisting of 13 subunits: a ten-subunit catalytic core composed of POLR1A/RPA1, POLR1B/RPA2, POLR1C/RPAC1, POLR1D/RPAC2, POLR1H/RPA12, POLR2E/RPABC1, POLR2F/RPABC2, POLR2H/RPABC3, POLR2K/RPABC4 and POLR2L/RPABC5; a mobile stalk subunit POLR1F/RPA43 protruding from the core and additional subunits homologous to general transcription factors POLR1E/RPA49 and POLR1G/RPA34. Interacts with RRN3/TIF-IA. Widely expressed. Expressed in all fetal and adult tissues tested, with highest expression in fetal lung, liver, and kidney, and low expression in all adult tissues.

The protein localises to the nucleus. The protein resides in the nucleolus. Component of RNA polymerase I (Pol I), a DNA-dependent RNA polymerase which synthesizes ribosomal RNA precursors using the four ribonucleoside triphosphates as substrates. Through its association with RRN3/TIF-IA may be involved in recruitment of Pol I to rDNA promoters. The chain is DNA-directed RNA polymerase I subunit RPA43 from Homo sapiens (Human).